A 225-amino-acid chain; its full sequence is NAD(P)H-quinone oxidoreductase subunit K, chloroplastic (225 aa).

The [4Fe-4S] cluster site is built by C43, C44, C108, and C139.

This sequence belongs to the complex I 20 kDa subunit family. As to quaternary structure, NDH is composed of at least 16 different subunits, 5 of which are encoded in the nucleus. [4Fe-4S] cluster is required as a cofactor.

The protein localises to the plastid. It localises to the chloroplast thylakoid membrane. It carries out the reaction a plastoquinone + NADH + (n+1) H(+)(in) = a plastoquinol + NAD(+) + n H(+)(out). It catalyses the reaction a plastoquinone + NADPH + (n+1) H(+)(in) = a plastoquinol + NADP(+) + n H(+)(out). In terms of biological role, NDH shuttles electrons from NAD(P)H:plastoquinone, via FMN and iron-sulfur (Fe-S) centers, to quinones in the photosynthetic chain and possibly in a chloroplast respiratory chain. The immediate electron acceptor for the enzyme in this species is believed to be plastoquinone. Couples the redox reaction to proton translocation, and thus conserves the redox energy in a proton gradient. This Guizotia abyssinica (Niger) protein is NAD(P)H-quinone oxidoreductase subunit K, chloroplastic.